Consider the following 620-residue polypeptide: Coenzyme F420-dependent sulfite reductase (620 aa).

The region spanning 6-35 is the 4Fe-4S ferredoxin-type 1 domain; sequence LNEIVDSGVCARCGTCTIVCPNGILTFDER. [4Fe-4S] cluster is bound by residues cysteine 15, cysteine 18, cysteine 21, cysteine 25, cysteine 428, cysteine 434, cysteine 468, cysteine 472, cysteine 495, cysteine 498, cysteine 501, cysteine 505, cysteine 524, cysteine 527, cysteine 530, and cysteine 534. Cysteine 472 lines the siroheme pocket. 2 consecutive 4Fe-4S ferredoxin-type domains span residues 486–515 and 520–544; these read KYPK…IRGE and NYNV…VKEE.

Belongs to the nitrite and sulfite reductase 4Fe-4S domain family. The cofactor is [4Fe-4S] cluster. Requires siroheme as cofactor.

It catalyses the reaction 3 oxidized coenzyme F420-(gamma-L-Glu)(n) + hydrogen sulfide + 3 H2O + 2 H(+) = 3 reduced coenzyme F420-(gamma-L-Glu)(n) + sulfite. Its function is as follows. Catalyzes the reduction of sulfite to sulfide using reduced F420 as the electron source. Involved in sulfite detoxification and assimilation. Cannot use NADH or NADPH. This Methanocaldococcus jannaschii (strain ATCC 43067 / DSM 2661 / JAL-1 / JCM 10045 / NBRC 100440) (Methanococcus jannaschii) protein is Coenzyme F420-dependent sulfite reductase.